Here is a 450-residue protein sequence, read N- to C-terminus: Tubulin alpha-2 chain (450 aa).

GTP-binding residues include glutamine 11, glutamate 71, glycine 144, threonine 145, threonine 179, asparagine 206, and asparagine 228. Glutamate 71 contacts Mg(2+). The active site involves glutamate 254. Threonine 349 carries the phosphothreonine modification. Positions 430 to 450 are disordered; that stretch reads KDYEEVGAEGGDDEDDEGEEY. Over residues 431-450 the composition is skewed to acidic residues; it reads DYEEVGAEGGDDEDDEGEEY.

Belongs to the tubulin family. Dimer of alpha and beta chains. A typical microtubule is a hollow water-filled tube with an outer diameter of 25 nm and an inner diameter of 15 nM. Alpha-beta heterodimers associate head-to-tail to form protofilaments running lengthwise along the microtubule wall with the beta-tubulin subunit facing the microtubule plus end conferring a structural polarity. Microtubules usually have 13 protofilaments but different protofilament numbers can be found in some organisms and specialized cells. Mg(2+) is required as a cofactor. In terms of processing, undergoes a tyrosination/detyrosination cycle, the cyclic removal and re-addition of a C-terminal tyrosine residue by the enzymes tubulin tyrosine carboxypeptidase (TTCP) and tubulin tyrosine ligase (TTL), respectively. Post-translationally, acetylation of alpha chains at Lys-40 stabilizes microtubules and affects affinity and processivity of microtubule motors. This modification has a role in multiple cellular functions, ranging from cell motility, cell cycle progression or cell differentiation to intracellular trafficking and signaling.

It localises to the cytoplasm. It is found in the cytoskeleton. It catalyses the reaction GTP + H2O = GDP + phosphate + H(+). Tubulin is the major constituent of microtubules, a cylinder consisting of laterally associated linear protofilaments composed of alpha- and beta-tubulin heterodimers. Microtubules grow by the addition of GTP-tubulin dimers to the microtubule end, where a stabilizing cap forms. Below the cap, tubulin dimers are in GDP-bound state, owing to GTPase activity of alpha-tubulin. The chain is Tubulin alpha-2 chain (TUBA2) from Arabidopsis thaliana (Mouse-ear cress).